Consider the following 209-residue polypeptide: Large ribosomal subunit protein uL3 (209 aa).

At Gln150 the chain carries N5-methylglutamine.

Belongs to the universal ribosomal protein uL3 family. In terms of assembly, part of the 50S ribosomal subunit. Forms a cluster with proteins L14 and L19. In terms of processing, methylated by PrmB.

Its function is as follows. One of the primary rRNA binding proteins, it binds directly near the 3'-end of the 23S rRNA, where it nucleates assembly of the 50S subunit. The sequence is that of Large ribosomal subunit protein uL3 from Aliivibrio fischeri (strain MJ11) (Vibrio fischeri).